The primary structure comprises 1063 residues: ATP-dependent helicase hrq1 (1063 aa).

A disordered region spans residues 224-243 (TQSRKNQPVPPDSPSIPNDS). The Helicase ATP-binding domain maps to 320–503 (INHLWNGFHV…KIFGVDNIKL (184 aa)). An ATP-binding site is contributed by 333–340 (TSTSSGKS). The DEAH box motif lies at 444-447 (DEAH). The Helicase C-terminal domain occupies 539-717 (EASKLLIKFA…ELPINIRSDE (179 aa)).

It belongs to the helicase family. HRQ1 subfamily. In terms of assembly, forms heptamer rings. Interacts with rhp14. It depends on Mg(2+) as a cofactor.

The protein resides in the nucleus. It catalyses the reaction Couples ATP hydrolysis with the unwinding of duplex DNA by translocating in the 3'-5' direction.. It carries out the reaction ATP + H2O = ADP + phosphate + H(+). Functionally, helicase with 3'-5' helicase activity involved in genome stability. Functions in the nucleotide excision repair (NER) pathway and plays a critical role in DNA interstrand cross-link repair. Unwinds relatively long duplex DNA up to 120-bp and requires a long 3'-tail of at least 70 nucleotides for efficient unwinding of duplex DNA. Shows both processive helicase and DNA strand annealing activities. Affects telomere length by a non-catalytic mechanism, probably through inhibiting telomerase by competing with it for ssDNA binding. This Schizosaccharomyces pombe (strain 972 / ATCC 24843) (Fission yeast) protein is ATP-dependent helicase hrq1.